The primary structure comprises 226 residues: Chalcone--flavanone isomerase 1 (226 aa).

T52, N117, and T194 together coordinate substrate.

It belongs to the chalcone isomerase family.

The enzyme catalyses a chalcone = a flavanone.. Its pathway is secondary metabolite biosynthesis; flavonoid biosynthesis. In terms of biological role, catalyzes the intramolecular cyclization of bicyclic chalcones into tricyclic (S)-flavanones. Responsible for the isomerization of 4,2',4',6'-tetrahydroxychalcone (also termed chalcone) into naringenin. The sequence is that of Chalcone--flavanone isomerase 1 (CHI1) from Lotus japonicus (Lotus corniculatus var. japonicus).